The sequence spans 177 residues: Large ribosomal subunit protein uL6 (177 aa).

It belongs to the universal ribosomal protein uL6 family. In terms of assembly, part of the 50S ribosomal subunit.

Its function is as follows. This protein binds to the 23S rRNA, and is important in its secondary structure. It is located near the subunit interface in the base of the L7/L12 stalk, and near the tRNA binding site of the peptidyltransferase center. This chain is Large ribosomal subunit protein uL6, found in Colwellia psychrerythraea (strain 34H / ATCC BAA-681) (Vibrio psychroerythus).